Consider the following 247-residue polypeptide: Small ribosomal subunit protein uS2 (247 aa).

The protein belongs to the universal ribosomal protein uS2 family.

The sequence is that of Small ribosomal subunit protein uS2 from Pseudomonas syringae pv. tomato (strain ATCC BAA-871 / DC3000).